A 390-amino-acid polypeptide reads, in one-letter code: Spore development regulator vosA (390 aa).

The 130-residue stretch at 3 to 132 folds into the Velvet domain; that stretch reads NNTSSDFDLI…ADQGVKLRIR (130 aa). Residues 137–149 are compositionally biased toward basic and acidic residues; the sequence is TMLKRSTRPDEFH. Disordered stretches follow at residues 137-191 and 265-390; these read TMLK…PVKR and QASA…GTPQ. A compositionally biased stretch (low complexity) spans 165 to 175; the sequence is PPSSSYGGYPP. A Nuclear localization signal motif is present at residues 273-280; that stretch reads IPDPTGQS. Polar residues-rich tracts occupy residues 350 to 364 and 371 to 390; these read QTPQANTPILPSQMV and SSVTGPTTFNHPDSPNGTPQ.

It belongs to the velvet family. VosA subfamily. Forms a heterodimeric complex with velB; the formation of the velB-vosA complex is light-dependent. Interacts with velA, velB and velC.

It localises to the nucleus. In terms of biological role, component of the velB-VosA heterodimeric complex that plays a dual role in activating genes associated with spore maturation and repressing certain development-associated genes. The complex binds DNA through the DNA-binding domain of vosA that recognizes an 11-nucleotide consensus sequence 5'-CTGGCCGCGGC-3' consisting of two motifs in the promoters of key developmental regulatory genes. The sequence is that of Spore development regulator vosA from Penicillium rubens (strain ATCC 28089 / DSM 1075 / NRRL 1951 / Wisconsin 54-1255) (Penicillium chrysogenum).